Consider the following 189-residue polypeptide: Glucose-6-phosphate isomerase (189 aa).

His-88, His-90, Glu-97, and His-136 together coordinate Fe cation.

Belongs to the archaeal-type GPI family. In terms of assembly, homodimer.

It is found in the cytoplasm. The enzyme catalyses alpha-D-glucose 6-phosphate = beta-D-fructose 6-phosphate. It functions in the pathway carbohydrate degradation; glycolysis; D-glyceraldehyde 3-phosphate and glycerone phosphate from D-glucose: step 2/4. The polypeptide is Glucose-6-phosphate isomerase (Thermococcus kodakarensis (strain ATCC BAA-918 / JCM 12380 / KOD1) (Pyrococcus kodakaraensis (strain KOD1))).